A 218-amino-acid polypeptide reads, in one-letter code: Pyridoxine/pyridoxamine 5'-phosphate oxidase (218 aa).

Substrate contacts are provided by residues 14-17 and Lys72; that span reads RREY. FMN-binding positions include 67–72, 82–83, Arg88, Lys89, and Gln111; these read RIVLLK and YT. Positions 129, 133, and 137 each coordinate substrate. FMN-binding positions include 146-147 and Trp191; that span reads QS. 197 to 199 lines the substrate pocket; sequence RLH. Arg201 provides a ligand contact to FMN.

The protein belongs to the pyridoxamine 5'-phosphate oxidase family. In terms of assembly, homodimer. The cofactor is FMN.

The catalysed reaction is pyridoxamine 5'-phosphate + O2 + H2O = pyridoxal 5'-phosphate + H2O2 + NH4(+). It catalyses the reaction pyridoxine 5'-phosphate + O2 = pyridoxal 5'-phosphate + H2O2. Its pathway is cofactor metabolism; pyridoxal 5'-phosphate salvage; pyridoxal 5'-phosphate from pyridoxamine 5'-phosphate: step 1/1. The protein operates within cofactor metabolism; pyridoxal 5'-phosphate salvage; pyridoxal 5'-phosphate from pyridoxine 5'-phosphate: step 1/1. Its function is as follows. Catalyzes the oxidation of either pyridoxine 5'-phosphate (PNP) or pyridoxamine 5'-phosphate (PMP) into pyridoxal 5'-phosphate (PLP). The polypeptide is Pyridoxine/pyridoxamine 5'-phosphate oxidase (Escherichia coli (strain SMS-3-5 / SECEC)).